Here is a 321-residue protein sequence, read N- to C-terminus: NADH-ubiquinone oxidoreductase chain 1 (321 aa).

Transmembrane regions (helical) follow at residues 2-22 (LVML…VAFL), 71-91 (ALFI…WMFI), 104-124 (LLVI…SGWA), 148-168 (LGLI…QAFI), 173-193 (HTWF…STLA), 224-244 (LFFL…AIMF), 255-275 (ILPI…FLWI), and 295-315 (FLPL…SLGG).

It belongs to the complex I subunit 1 family.

Its subcellular location is the mitochondrion inner membrane. It carries out the reaction a ubiquinone + NADH + 5 H(+)(in) = a ubiquinol + NAD(+) + 4 H(+)(out). In terms of biological role, core subunit of the mitochondrial membrane respiratory chain NADH dehydrogenase (Complex I) that is believed to belong to the minimal assembly required for catalysis. Complex I functions in the transfer of electrons from NADH to the respiratory chain. The immediate electron acceptor for the enzyme is believed to be ubiquinone. This is NADH-ubiquinone oxidoreductase chain 1 (MT-ND1) from Lampetra fluviatilis (European river lamprey).